A 219-amino-acid polypeptide reads, in one-letter code: ATP synthase protein MI25 (219 aa).

Residues Ile29–Ser49 traverse the membrane as a helical segment.

It belongs to the ATPase protein MI25 family. F-type ATPases have 2 components, CF(1) - the catalytic core - and CF(0) - the membrane proton channel. CF(1) has five subunits: alpha(3), beta(3), gamma(1), delta(1), epsilon(1). CF(0) has three main subunits: a, b and c.

It is found in the mitochondrion membrane. Its function is as follows. This is one of the chains of the nonenzymatic component (CF(0) subunit) of the mitochondrial ATPase complex. The sequence is that of ATP synthase protein MI25 from Zea mays (Maize).